The sequence spans 396 residues: Aldo-keto reductase ausK (396 aa).

D76 contributes to the NADP(+) binding site. Y81 (proton donor) is an active-site residue. H156 provides a ligand contact to substrate. NADP(+) is bound by residues 186–187, Q212, 241–251, and 317–325; these read CN, DALGSGKFQSR, and RKIQHLHDN.

This sequence belongs to the aldo/keto reductase family. Aldo/keto reductase 2 subfamily. Homodimer.

It functions in the pathway secondary metabolite biosynthesis; terpenoid biosynthesis. Aldo-keto reductase; part of the gene cluster that mediates the biosynthesis of calidodehydroaustin, a fungal meroterpenoid. The first step of the pathway is the synthesis of 3,5-dimethylorsellinic acid by the polyketide synthase ausA. 3,5-dimethylorsellinic acid is then prenylated by the polyprenyl transferase ausN. Further epoxidation by the FAD-dependent monooxygenase ausM and cyclization by the probable terpene cyclase ausL lead to the formation of protoaustinoid A. Protoaustinoid A is then oxidized to spiro-lactone preaustinoid A3 by the combined action of the FAD-binding monooxygenases ausB and ausC, and the dioxygenase ausE. Acid-catalyzed keto-rearrangement and ring contraction of the tetraketide portion of preaustinoid A3 by ausJ lead to the formation of preaustinoid A4. The aldo-keto reductase ausK, with the help of ausH, is involved in the next step by transforming preaustinoid A4 into isoaustinone which is in turn hydroxylated by the P450 monooxygenase ausI to form austinolide. The cytochrome P450 monooxygenase ausG modifies austinolide to austinol. Austinol is further acetylated to austin by the O-acetyltransferase ausP, which spontaneously changes to dehydroaustin. The cytochrome P450 monooxygenase ausR then converts dehydroaustin is into 7-dehydrodehydroaustin. The hydroxylation catalyzed by ausR permits the O-acetyltransferase ausQ to add an additional acetyl group to the molecule, leading to the formation of acetoxydehydroaustin. The short chain dehydrogenase ausT catalyzes the reduction of the double bond present between carbon atoms 1 and 2 to convert 7-dehydrodehydroaustin into 1,2-dihydro-7-hydroxydehydroaustin. AusQ catalyzes not only an acetylation reaction but also the addition of the PKS ausV diketide product to 1,2-dihydro-7-hydroxydehydroaustin, forming precalidodehydroaustin. Finally, the iron/alpha-ketoglutarate-dependent dioxygenase converts precalidodehydroaustin into calidodehydroaustin. The protein is Aldo-keto reductase ausK of Aspergillus calidoustus.